A 287-amino-acid chain; its full sequence is NAD kinase (287 aa).

Aspartate 70 acts as the Proton acceptor in catalysis. NAD(+)-binding positions include 70–71 (DG), 144–145 (ND), arginine 155, lysine 172, aspartate 174, 185–190 (TAYSLS), and glutamine 244.

The protein belongs to the NAD kinase family. A divalent metal cation is required as a cofactor.

Its subcellular location is the cytoplasm. The enzyme catalyses NAD(+) + ATP = ADP + NADP(+) + H(+). Involved in the regulation of the intracellular balance of NAD and NADP, and is a key enzyme in the biosynthesis of NADP. Catalyzes specifically the phosphorylation on 2'-hydroxyl of the adenosine moiety of NAD to yield NADP. This is NAD kinase from Solibacter usitatus (strain Ellin6076).